Here is a 434-residue protein sequence, read N- to C-terminus: MTDFSPREIVSELDRFIVGQADAKRAVSIALRNRWRRLQLDTGLREEVLPKNILMIGPTGVGKTEIARRLAKLAGAPFLKVEATKFTEVGYVGRDVEQIIRDLVEVAIHQVRERKRKDVAARAQLAAEERVLDALVGANSSAATRDSFRRKLRAGELNDKEIEIETQSSGGGMPMFEIPGMPGAQMGAISIGDIFGKLGGRTKTRRVTVEASHDILIAEESDKLLDSDQLVQEAINVVENNGIVFLDEIDKICVRENRHGGDVSREGVQRDLLPLIEGTTVSTKHGAVKTDHILFIASGAFHIAKPSDLLPELQGRLPIRVELQALTRDDMRRILTEPEASLIKQYVALMKTEGVTLDITDDAIDALADVAVAVNSTVENIGARRLQTVMERVLDDISFTASDRTGETMRVDAAYVQQHIGDLAKNADLSRFIL.

ATP-binding positions include valine 18, 60 to 65 (GVGKTE), aspartate 247, glutamate 312, and arginine 384.

Belongs to the ClpX chaperone family. HslU subfamily. In terms of assembly, a double ring-shaped homohexamer of HslV is capped on each side by a ring-shaped HslU homohexamer. The assembly of the HslU/HslV complex is dependent on binding of ATP.

It is found in the cytoplasm. Its function is as follows. ATPase subunit of a proteasome-like degradation complex; this subunit has chaperone activity. The binding of ATP and its subsequent hydrolysis by HslU are essential for unfolding of protein substrates subsequently hydrolyzed by HslV. HslU recognizes the N-terminal part of its protein substrates and unfolds these before they are guided to HslV for hydrolysis. This is ATP-dependent protease ATPase subunit HslU from Bradyrhizobium sp. (strain ORS 278).